Consider the following 161-residue polypeptide: SsrA-binding protein (161 aa).

The tract at residues 138 to 161 (DKRTDSKEKDWNRDKARIMKSSLR) is disordered. The span at 139–154 (KRTDSKEKDWNRDKAR) shows a compositional bias: basic and acidic residues.

Belongs to the SmpB family.

The protein resides in the cytoplasm. Required for rescue of stalled ribosomes mediated by trans-translation. Binds to transfer-messenger RNA (tmRNA), required for stable association of tmRNA with ribosomes. tmRNA and SmpB together mimic tRNA shape, replacing the anticodon stem-loop with SmpB. tmRNA is encoded by the ssrA gene; the 2 termini fold to resemble tRNA(Ala) and it encodes a 'tag peptide', a short internal open reading frame. During trans-translation Ala-aminoacylated tmRNA acts like a tRNA, entering the A-site of stalled ribosomes, displacing the stalled mRNA. The ribosome then switches to translate the ORF on the tmRNA; the nascent peptide is terminated with the 'tag peptide' encoded by the tmRNA and targeted for degradation. The ribosome is freed to recommence translation, which seems to be the essential function of trans-translation. The chain is SsrA-binding protein from Aliivibrio fischeri (strain ATCC 700601 / ES114) (Vibrio fischeri).